Consider the following 786-residue polypeptide: Spermatogenesis-associated protein 20 (786 aa).

A signal peptide spans 1 to 22 (MLGARAWLGRVLLLPRAGAGLA). Positions 23 to 61 (ASRRGSSSRDKDRSATVSSSVPMPAGGKGSHPSSTPQRV) are disordered. Position 649 is a phosphoserine (serine 649).

It localises to the secreted. May play a role in fertility regulation. In Homo sapiens (Human), this protein is Spermatogenesis-associated protein 20 (SPATA20).